A 182-amino-acid chain; its full sequence is UPF0200 protein Mboo_1593 (182 aa).

Position 8 to 15 (8 to 15 (GLPASGKG)) interacts with ATP.

This sequence belongs to the UPF0200 family.

In Methanoregula boonei (strain DSM 21154 / JCM 14090 / 6A8), this protein is UPF0200 protein Mboo_1593.